A 515-amino-acid polypeptide reads, in one-letter code: 1-pyrroline-5-carboxylate dehydrogenase (515 aa).

Residues E286 and C320 contribute to the active site.

This sequence belongs to the aldehyde dehydrogenase family. RocA subfamily.

The enzyme catalyses L-glutamate 5-semialdehyde + NAD(+) + H2O = L-glutamate + NADH + 2 H(+). It functions in the pathway amino-acid degradation; L-proline degradation into L-glutamate; L-glutamate from L-proline: step 2/2. The sequence is that of 1-pyrroline-5-carboxylate dehydrogenase from Bacillus mycoides (strain KBAB4) (Bacillus weihenstephanensis).